A 98-amino-acid chain; its full sequence is NADH-ubiquinone oxidoreductase chain 4L (98 aa).

Helical transmembrane passes span 1–21 (MSLT…GLLM), 29–49 (SLLC…VIIL), and 61–81 (IILL…LVMV).

It belongs to the complex I subunit 4L family. As to quaternary structure, core subunit of respiratory chain NADH dehydrogenase (Complex I) which is composed of 45 different subunits.

Its subcellular location is the mitochondrion inner membrane. It carries out the reaction a ubiquinone + NADH + 5 H(+)(in) = a ubiquinol + NAD(+) + 4 H(+)(out). In terms of biological role, core subunit of the mitochondrial membrane respiratory chain NADH dehydrogenase (Complex I) which catalyzes electron transfer from NADH through the respiratory chain, using ubiquinone as an electron acceptor. Part of the enzyme membrane arm which is embedded in the lipid bilayer and involved in proton translocation. The protein is NADH-ubiquinone oxidoreductase chain 4L (MT-ND4L) of Uroderma bilobatum (Tent-making bat).